Here is a 177-residue protein sequence, read N- to C-terminus: Large ribosomal subunit protein uL5 (177 aa).

This sequence belongs to the universal ribosomal protein uL5 family. Part of the 50S ribosomal subunit; part of the 5S rRNA/L5/L18/L25 subcomplex. Contacts the 5S rRNA and the P site tRNA. Forms a bridge to the 30S subunit in the 70S ribosome.

Functionally, this is one of the proteins that bind and probably mediate the attachment of the 5S RNA into the large ribosomal subunit, where it forms part of the central protuberance. In the 70S ribosome it contacts protein S13 of the 30S subunit (bridge B1b), connecting the 2 subunits; this bridge is implicated in subunit movement. Contacts the P site tRNA; the 5S rRNA and some of its associated proteins might help stabilize positioning of ribosome-bound tRNAs. This is Large ribosomal subunit protein uL5 from Wolbachia pipientis wMel.